The chain runs to 1923 residues: Endoribonuclease Dicer (1923 aa).

One can recognise a Helicase ATP-binding domain in the interval 51-227; that stretch reads LLEAALDHNT…ELEEKIQKLE (177 aa). 64-71 is a binding site for ATP; sequence LNTGSGKT. Residues 175–178 carry the DECH box motif; it reads DECH. The tract at residues 256 to 595 is required for interaction with PRKRA and TARBP2; it reads DCGPFTDRSG…LRNKCSKSVD (340 aa). The segment at 410 to 433 is disordered; that stretch reads VSWSDSEDDEEDEEIEEKEKPETN. A phosphoserine mark is found at Ser-413 and Ser-415. The segment covering 414 to 425 has biased composition (acidic residues); that stretch reads DSEDDEEDEEIE. A Helicase C-terminal domain is found at 433–602; sequence NFPSPFTNIL…SVDTGEADTE (170 aa). One can recognise a Dicer dsRNA-binding fold domain in the interval 629-721; it reads AIGHVNRYCA…MPVGKETVKY (93 aa). Positions 894–1041 constitute a PAZ domain; that stretch reads KFMEDIEKSE…LVPELCAIHP (148 aa). 2 positions are modified to phosphoserine: Ser-1015 and Ser-1160. 2 stretches are compositionally biased toward polar residues: residues 1246–1255 and 1277–1290; these read NANTSTSDGS and SEQS…SRTL. Residues 1246-1291 form a disordered region; it reads NANTSTSDGSPVTAAVPGTTETGEAPPDRTASEQSPSPGYSSRTLG. One can recognise an RNase III 1 domain in the interval 1276–1404; it reads ASEQSPSPGY…TEKWEKDEMT (129 aa). Positions 1316, 1396, and 1399 each coordinate Mg(2+). A phosphoserine mark is found at Ser-1461, Ser-1469, and Ser-1471. The region spanning 1667 to 1825 is the RNase III 2 domain; the sequence is FENFEKKINY…LAGAIYMDSG (159 aa). The Mg(2+) site is built by Glu-1706, Asp-1811, and Glu-1814. The region spanning 1853 to 1915 is the DRBM domain; sequence SPVRELLEME…ARRALRSLKA (63 aa). Ser-1869 is modified (phosphoserine).

It belongs to the helicase family. Dicer subfamily. In terms of assembly, component of the RISC loading complex (RLC), or micro-RNA (miRNA) loading complex (miRLC), which is composed of DICER1, AGO2 and TARBP2; DICER1 and TARBP2 are required to process precursor miRNAs (pre-miRNAs) to mature miRNAs and then load them onto AGO2. Note that the trimeric RLC/miRLC is also referred to as RISC. Interacts with DHX9, AGO1, PIWIL1 and PRKRA. Interacts with AGO2, TARBP2, EIF6, MOV10 and RPL7A (60S ribosome subunit); they form a large RNA-induced silencing complex (RISC). Interacts with BCDIN3D. Interacts (via Dicer dsRNA-binding fold domain) with ALOX5 (via PLAT domain); this interaction enhances arachidonate 5-lipoxygenase activity and modifies the miRNA precursor processing activity of DICER1. Mg(2+) serves as cofactor. Mn(2+) is required as a cofactor.

Its subcellular location is the cytoplasm. It carries out the reaction Endonucleolytic cleavage to 5'-phosphomonoester.. Double-stranded RNA (dsRNA) endoribonuclease playing a central role in short dsRNA-mediated post-transcriptional gene silencing. Cleaves naturally occurring long dsRNAs and short hairpin pre-microRNAs (miRNA) into fragments of twenty-one to twenty-three nucleotides with 3' overhang of two nucleotides, producing respectively short interfering RNAs (siRNA) and mature microRNAs. SiRNAs and miRNAs serve as guide to direct the RNA-induced silencing complex (RISC) to complementary RNAs to degrade them or prevent their translation. Gene silencing mediated by siRNAs, also called RNA interference, controls the elimination of transcripts from mobile and repetitive DNA elements of the genome but also the degradation of exogenous RNA of viral origin for instance. The miRNA pathway on the other side is a mean to specifically regulate the expression of target genes. This chain is Endoribonuclease Dicer (DICER1), found in Bos taurus (Bovine).